We begin with the raw amino-acid sequence, 266 residues long: Glucosamine-6-phosphate deaminase (266 aa).

Asp-72 acts as the Proton acceptor; for enolization step in catalysis. Catalysis depends on Asp-141, which acts as the For ring-opening step. His-143 functions as the Proton acceptor; for ring-opening step in the catalytic mechanism. Glu-148 (for ring-opening step) is an active-site residue.

This sequence belongs to the glucosamine/galactosamine-6-phosphate isomerase family. NagB subfamily. In terms of assembly, homohexamer; trimer of disulfide-linked dimers.

The enzyme catalyses alpha-D-glucosamine 6-phosphate + H2O = beta-D-fructose 6-phosphate + NH4(+). Its pathway is amino-sugar metabolism; N-acetylneuraminate degradation; D-fructose 6-phosphate from N-acetylneuraminate: step 5/5. Allosterically activated by N-acetylglucosamine 6-phosphate (GlcNAc6P). Its function is as follows. Catalyzes the reversible isomerization-deamination of glucosamine 6-phosphate (GlcN6P) to form fructose 6-phosphate (Fru6P) and ammonium ion. The sequence is that of Glucosamine-6-phosphate deaminase from Shigella flexneri serotype 5b (strain 8401).